Consider the following 540-residue polypeptide: MRVNNGLTPQELEAYGISDVHDIVYNPSYDLLYQEELDPSLTGYERGVLTNLGAVAVDTGIFTGRSPKDKYIVRDDTTRDTFWWADKGKGKNDNKPLSPETWQHLKGLVTKQLSGKRLFVVDAFCGANPDTRLSVRFITEVAWQAHFVKNMFIRPSDEELAGFKPDFIVMNGAKCTNPQWKEQGLNSENFVAFNLTERMQLIGGTWYGGEMKKGMFSMMNYLLPLKGIASMHCSANVGEKGDVAVFFGLSGTGKTTLSTDPKRRLIGDDEHGWDDDGVFNFEGGCYAKTIKLSKEAEPEIYNAIRRDALLENVTVREDGSIDFDDGSKTENTRVSYPIYHIENIVKPVSKAGHATKVIFLTADAFGVLPPVSRLTADQTQYHFLSGFTAKLAGTERGITEPTPTFSACFGAAFLSLHPTQYAEVLVKRMQAAGAQAYLVNTGWNGTGKRISIKDTRAIIDAILNGSLDNAETFTLPMFNLAIPTELPGVDTKILDPRNTYASPEQWQEKAETLAKLFIDNFDKYTDTPAGAALVAAGPKL.

Substrate is bound at residue Arg-65. At Lys-87 the chain carries N6-acetyllysine. Tyr-207 and Lys-213 together coordinate substrate. ATP contacts are provided by residues Lys-213, His-232, and 248–256; that span reads GLSGTGKTT. Lys-213 and His-232 together coordinate Mn(2+). Position 269 (Asp-269) interacts with Mn(2+). ATP-binding positions include Glu-297, Arg-333, 449 to 450, and Thr-455; that span reads RI. Substrate is bound at residue Arg-333. Lys-523 carries the N6-acetyllysine modification.

Belongs to the phosphoenolpyruvate carboxykinase (ATP) family. In terms of assembly, monomer. Mn(2+) serves as cofactor.

It is found in the cytoplasm. It catalyses the reaction oxaloacetate + ATP = phosphoenolpyruvate + ADP + CO2. Its pathway is carbohydrate biosynthesis; gluconeogenesis. In terms of biological role, involved in the gluconeogenesis. Catalyzes the conversion of oxaloacetate (OAA) to phosphoenolpyruvate (PEP) through direct phosphoryl transfer between the nucleoside triphosphate and OAA. This Escherichia coli O7:K1 (strain IAI39 / ExPEC) protein is Phosphoenolpyruvate carboxykinase (ATP).